Here is a 410-residue protein sequence, read N- to C-terminus: Mating-type locus allele B6 protein (410 aa).

Positions 1–110 (MSRDPKLSLS…VNVASPAVEY (110 aa)) are variable domain between B alleles. A DNA-binding region (homeobox; TALE-type) is located at residues 107 to 184 (AVEYRNLSED…NARRRSGWSH (78 aa)). The interval 111–410 (RNLSEDLPAY…PFFCLSIAFV (300 aa)) is highly conserved between B alleles. 3 disordered regions span residues 202–224 (RAKL…PSDD), 278–335 (TPKP…TPEL), and 373–393 (KARG…QQPD). The segment covering 205–219 (LSSSNQSTPPSLTSE) has biased composition (polar residues). Positions 276–308 (KKTPKPGMPRPVTTVAKRQPARKTKPAAKPKSR) match the Nuclear localization signal motif. Residues 294–307 (QPARKTKPAAKPKS) show a composition bias toward basic residues. Over residues 312–335 (PRASTTPSIDSTLDSSKLESTPEL) the composition is skewed to polar residues. The segment at 333–410 (PELSMCSTAD…PFFCLSIAFV (78 aa)) is not essential for B6 function. The span at 375–388 (RGNRKVKALPKRAG) shows a compositional bias: basic residues.

Belongs to the TALE/M-ATYP homeobox family.

Its subcellular location is the nucleus. The B locus has at least 25 alleles, and any combination of two different B alleles yields a multimeric regulatory protein, that activates genes responsible for the pathogenicity and for the sexual development of the fungus within the corn plant. The chain is Mating-type locus allele B6 protein from Mycosarcoma maydis (Corn smut fungus).